The chain runs to 375 residues: Deoxyhypusine synthase-like protein (375 aa).

It belongs to the deoxyhypusine synthase family.

In Elusimicrobium minutum (strain Pei191), this protein is Deoxyhypusine synthase-like protein.